A 122-amino-acid chain; its full sequence is Large ribosomal subunit protein uL14c (122 aa).

It belongs to the universal ribosomal protein uL14 family. In terms of assembly, part of the 50S ribosomal subunit.

The protein localises to the plastid. Its subcellular location is the chloroplast. In terms of biological role, binds to 23S rRNA. This Tupiella akineta (Green alga) protein is Large ribosomal subunit protein uL14c.